A 298-amino-acid polypeptide reads, in one-letter code: MIPYATVEEASIALGRNLTRLETLWFDYSATKSDYYLYCHNILFLFLVFSLVPLPLVFVELARSASGLFNRYKIQPKVNYSLSDMFKCYKDVMTMFILVVGPLQLVSYPSIQMIEIRSGLPLPTITEMLSQLVVYFLIEDYTNYWVHRFFHSKWGYDKIHRVHHEYTAPIGYAAPYAHWAEVLLLGIPTFMGPAIAPGHMITFWLWIALRQMEAIETHSGYDFPWSPTKYIPFYGGAEYHDYHHYVGGQSQSNFASVFTYCDYIYGTDKGYRFQKKLLEQIKESSKKSNKHNGGIKSD.

3 consecutive transmembrane segments (helical) span residues 42–62 (ILFLFLVFSLVPLPLVFVELA), 96–116 (FILVVGPLQLVSYPSIQMIEI), and 118–138 (SGLPLPTITEMLSQLVVYFLI). The 136-residue stretch at 132-267 (LVVYFLIEDY…FTYCDYIYGT (136 aa)) folds into the Fatty acid hydroxylase domain. The short motif at 147–151 (HRFFH) is the Histidine box-1 element. The short motif at 160–164 (HRVHH) is the Histidine box-2 element. Residues 189-209 (TFMGPAIAPGHMITFWLWIAL) form a helical membrane-spanning segment. A Histidine box-3 motif is present at residues 239–245 (YHDYHHY).

This sequence belongs to the sterol desaturase family. In terms of assembly, interacts with ACBP1. Fe cation is required as a cofactor. Expressed in rosettes, stems, roots, floral buds, flowers and siliques.

The protein localises to the endoplasmic reticulum membrane. It carries out the reaction 4,4-dimethyl-5alpha-cholest-7-en-3beta-ol + 6 Fe(II)-[cytochrome b5] + 3 O2 + 5 H(+) = 4alpha-carboxy-4beta-methyl-5alpha-cholest-7-ene-3beta-ol + 6 Fe(III)-[cytochrome b5] + 4 H2O. The enzyme catalyses 24-methylenecycloartanol + 6 Fe(II)-[cytochrome b5] + 3 O2 + 5 H(+) = 4alpha-carboxy-4beta,14alpha-dimethyl-9beta,19-cyclo-5alpha-ergost-24(24(1))-en-3beta-ol + 6 Fe(III)-[cytochrome b5] + 4 H2O. In terms of biological role, non-heme iron oxygenase involved in sterols biosynthesis by catalyzing the removal of the first methyl group at the C-4 position. 4,4-dimethyl-9-beta,19-cyclopropylsterols such as 24-methylenecycloartanol are the preferred substrates. Acts as a rate-limiting enzyme in the sterol pathway via interaction with ACBP1; sterols serve as lipid modulators for gene expression of homeodomain-leucine zipper IV transcription factors. Together with SMO1-2, involved in the maintenance of sterol composition to balance auxin and cytokinin activities during embryogenesis. The polypeptide is Methylsterol monooxygenase 1-1 (Arabidopsis thaliana (Mouse-ear cress)).